Here is an 80-residue protein sequence, read N- to C-terminus: Exodeoxyribonuclease 7 small subunit (80 aa).

Belongs to the XseB family. Heterooligomer composed of large and small subunits.

It is found in the cytoplasm. The catalysed reaction is Exonucleolytic cleavage in either 5'- to 3'- or 3'- to 5'-direction to yield nucleoside 5'-phosphates.. Bidirectionally degrades single-stranded DNA into large acid-insoluble oligonucleotides, which are then degraded further into small acid-soluble oligonucleotides. This Caulobacter sp. (strain K31) protein is Exodeoxyribonuclease 7 small subunit.